The chain runs to 1004 residues: ABC transporter G family member 25 (1004 aa).

The N-terminal stretch at methionine 1 to cysteine 27 is a signal peptide. Residues alanine 271–tyrosine 291 traverse the membrane as a helical segment. The segment at serine 343–alanine 373 is disordered. Basic and acidic residues predominate over residues glutamate 352–glycine 361. Basic residues predominate over residues lysine 362–histidine 372. Residues valine 419–glutamate 659 form the ABC transporter domain. Glycine 451 to threonine 458 lines the ATP pocket. A run of 6 helical transmembrane segments spans residues alanine 776–isoleucine 796, phenylalanine 804–alanine 824, leucine 886–phenylalanine 906, glutamate 907–threonine 927, tryptophan 943–threonine 963, and phenylalanine 978–leucine 998.

This sequence belongs to the ABC transporter superfamily. ABCG family. Eye pigment precursor importer (TC 3.A.1.204) subfamily.

Its subcellular location is the membrane. The sequence is that of ABC transporter G family member 25 from Oryza sativa subsp. japonica (Rice).